The primary structure comprises 70 residues: Cold shock-like protein CspH (70 aa).

Positions Gly7–Val67 constitute a CSD domain.

It localises to the cytoplasm. The chain is Cold shock-like protein CspH (cspH) from Escherichia coli O6:H1 (strain CFT073 / ATCC 700928 / UPEC).